The sequence spans 298 residues: Transcription factor bHLH114 (298 aa).

Positions 117-149 form a coiled coil; sequence LDHEIRNHKSSKEQITQDYKNLTSKRSEELEEN. The interval 126 to 154 is disordered; sequence SSKEQITQDYKNLTSKRSEELEENSDEYS. Over residues 129–140 the composition is skewed to polar residues; the sequence is EQITQDYKNLTS. A bHLH domain is found at 163 to 212; it reads LETLSPLPSFKVRKEKLGDRITALQQLVSPFGKTDTASVLNEAVEYIKFL.

In terms of assembly, homodimer. As to expression, differentiating root endodermis.

Its subcellular location is the nucleus. The chain is Transcription factor bHLH114 (BHLH114) from Arabidopsis thaliana (Mouse-ear cress).